Reading from the N-terminus, the 130-residue chain is Small ribosomal subunit protein uS9 (130 aa).

The disordered stretch occupies residues 111–130; it reads VERKKVGLHKARRATQFSKR. Residues 116–130 are compositionally biased toward basic residues; sequence VGLHKARRATQFSKR.

Belongs to the universal ribosomal protein uS9 family.

This Xylella fastidiosa (strain M23) protein is Small ribosomal subunit protein uS9.